A 904-amino-acid polypeptide reads, in one-letter code: Envelope glycoprotein B (904 aa).

The signal sequence occupies residues methionine 1–alanine 22. The Virion surface segment spans residues alanine 23 to proline 771. A disordered region spans residues valine 40 to alanine 83. A compositionally biased stretch (basic residues) spans lysine 60–proline 70. N-linked (GlcNAc...) asparagine; by host glycans are attached at residues asparagine 82 and asparagine 136. Disulfide bonds link cysteine 111–cysteine 570, cysteine 128–cysteine 526, cysteine 202–cysteine 266, cysteine 359–cysteine 407, and cysteine 593–cysteine 630. Involved in fusion and/or binding to host membrane regions lie at residues valine 168–tyrosine 174 and arginine 253–tyrosine 260. 3 N-linked (GlcNAc...) asparagine; by host glycosylation sites follow: asparagine 393, asparagine 425, and asparagine 486. The interval glutamine 467 to glutamate 490 is disordered. An N-linked (GlcNAc...) asparagine; by host glycan is attached at asparagine 671. Hydrophobic membrane proximal region regions lie at residues isoleucine 716–serine 769 and methionine 728–methionine 768. Residues phenylalanine 772–phenylalanine 792 form a helical membrane-spanning segment. Residues arginine 793–leucine 904 lie on the Intravirion side of the membrane. The segment at threonine 816–phenylalanine 835 is disordered. The short motif at tyrosine 849–leucine 852 is the Golgi targeting element. The interval lysine 883–leucine 904 is disordered. Residues tyrosine 889 to leucine 892 carry the Internalization motif motif.

This sequence belongs to the herpesviridae glycoprotein B family. As to quaternary structure, homotrimer; disulfide-linked. Binds to heparan sulfate proteoglycans. Interacts with gH/gL heterodimer.

Its subcellular location is the virion membrane. It is found in the host cell membrane. The protein resides in the host endosome membrane. It localises to the host Golgi apparatus membrane. Envelope glycoprotein that forms spikes at the surface of virion envelope. Essential for the initial attachment to heparan sulfate moieties of the host cell surface proteoglycans. Involved in fusion of viral and cellular membranes leading to virus entry into the host cell. Following initial binding to its host receptors, membrane fusion is mediated by the fusion machinery composed at least of gB and the heterodimer gH/gL. May be involved in the fusion between the virion envelope and the outer nuclear membrane during virion egress. The chain is Envelope glycoprotein B from Homo sapiens (Human).